The chain runs to 1505 residues: Phosphatidylinositol 3-kinase C2 domain-containing subunit gamma (1505 aa).

The interval Met-1 to Ser-32 is disordered. The segment covering Asn-10 to Leu-31 has biased composition (basic and acidic residues). The PI3K-RBD domain maps to Pro-278–Asp-370. The 149-residue stretch at Leu-540 to Pro-688 folds into the C2 PI3K-type domain. Residues Arg-703–Cys-879 enclose the PIK helical domain. The PI3K/PI4K catalytic domain maps to Asp-948–Pro-1226. The G-loop stretch occupies residues Tyr-954–Leu-960. The interval Gly-1090–Asn-1098 is catalytic loop. The tract at residues His-1109 to Thr-1135 is activation loop. In terms of domain architecture, PX spans Leu-1259–Gln-1371. One can recognise a C2 domain in the interval His-1384–Ile-1505.

It belongs to the PI3/PI4-kinase family. As to expression, predominantly expressed in normal liver. High levels also found in regenerating liver. Very low levels found in heart and testis.

Its subcellular location is the membrane. The catalysed reaction is a 1,2-diacyl-sn-glycero-3-phospho-(1D-myo-inositol) + ATP = a 1,2-diacyl-sn-glycero-3-phospho-(1D-myo-inositol-3-phosphate) + ADP + H(+). It carries out the reaction a 1,2-diacyl-sn-glycero-3-phospho-(1D-myo-inositol 4-phosphate) + ATP = a 1,2-diacyl-sn-glycero-3-phospho-(1D-myo-inositol-3,4-bisphosphate) + ADP + H(+). Its function is as follows. Generates phosphatidylinositol 3-phosphate (PtdIns3P) and phosphatidylinositol 3,4-bisphosphate (PtdIns(3,4)P2) that act as second messengers. May play a role in SDF1A-stimulated chemotaxis. In Rattus norvegicus (Rat), this protein is Phosphatidylinositol 3-kinase C2 domain-containing subunit gamma (Pik3c2g).